Here is a 212-residue protein sequence, read N- to C-terminus: Proteasome subunit beta (212 aa).

Positions 1-11 (MSQEHQDVKTG) are cleaved as a propeptide — removed in mature form; by autocatalysis. Thr12 (nucleophile) is an active-site residue.

Belongs to the peptidase T1B family. As to quaternary structure, the 20S proteasome core is composed of 14 alpha and 14 beta subunits that assemble into four stacked heptameric rings, resulting in a barrel-shaped structure. The two inner rings, each composed of seven catalytic beta subunits, are sandwiched by two outer rings, each composed of seven alpha subunits. The catalytic chamber with the active sites is on the inside of the barrel. Has a gated structure, the ends of the cylinder being occluded by the N-termini of the alpha-subunits. Is capped at one or both ends by the proteasome regulatory ATPase, PAN.

The protein resides in the cytoplasm. The catalysed reaction is Cleavage of peptide bonds with very broad specificity.. Its activity is regulated as follows. The formation of the proteasomal ATPase PAN-20S proteasome complex, via the docking of the C-termini of PAN into the intersubunit pockets in the alpha-rings, triggers opening of the gate for substrate entry. Interconversion between the open-gate and close-gate conformations leads to a dynamic regulation of the 20S proteasome proteolysis activity. Component of the proteasome core, a large protease complex with broad specificity involved in protein degradation. The protein is Proteasome subunit beta of Methanocorpusculum labreanum (strain ATCC 43576 / DSM 4855 / Z).